Reading from the N-terminus, the 134-residue chain is Submaxillary gland androgen-regulated protein 3A (134 aa).

Positions 1 to 22 are cleaved as a signal peptide; it reads MKSLTWILGLWALAACFTPGES. The interval 19 to 134 is disordered; it reads PGESQRGPRG…TDPALPTPAP (116 aa). Composition is skewed to pro residues over residues 28 to 43, 50 to 85, and 94 to 119; these read GPYP…PPCF, VPPP…PPYG, and LPPP…PPFF.

It belongs to the PROL1/PROL3 family.

The protein resides in the secreted. Functionally, may play a role in protection or detoxification. In Homo sapiens (Human), this protein is Submaxillary gland androgen-regulated protein 3A (SMR3A).